A 461-amino-acid polypeptide reads, in one-letter code: Threonine/serine transporter ThrP (461 aa).

12 helical membrane-spanning segments follow: residues 17 to 37 (IELI…AAST), 40 to 60 (WAGP…FFIM), 97 to 117 (WFMW…YVQF), 123 to 143 (AQWI…LAAV), 156 to 176 (IKVT…FFGF), 201 to 221 (GFLT…LIGI), 244 to 264 (ILIF…WNEI), 278 to 298 (IGIT…ALSG), 333 to 353 (VAGV…NYII), 360 to 380 (FVYV…VILI), 401 to 421 (IMFP…LIGM), and 430 to 450 (SLFV…VFGL).

The protein belongs to the amino acid-polyamine-organocation (APC) superfamily.

It localises to the cell inner membrane. The enzyme catalyses L-threonine(in) + H(+)(in) = L-threonine(out) + H(+)(out). The catalysed reaction is L-serine(in) + H(+)(in) = L-serine(out) + H(+)(out). Its function is as follows. Permease that mediates the proton-dependent threonine and serine uptake. This chain is Threonine/serine transporter ThrP, found in Salmonella typhi.